Consider the following 62-residue polypeptide: Bowman-Birk type proteinase inhibitor (62 aa).

Cystine bridges form between C8–C61, C9–C24, C12–C57, C14–C22, C31–C38, C35–C50, and C40–C48.

Forms a monomer at protein concentrations of below 1 mM. At concentrations of above 2 mM, self-associates.

Functionally, inhibits trypsin but not chymotrypsin. Inhibits the trypsin-like proteinase activity present in larvae of the crop pests Adoxophyes orana, Hyphantria cunea, Lobesia botrana and Ostrinia nubilalis. This chain is Bowman-Birk type proteinase inhibitor, found in Medicago scutellata (Snail medic).